Consider the following 520-residue polypeptide: Aldehyde dehydrogenase 5, mitochondrial (520 aa).

The transit peptide at 1 to 23 (MLSRTRAAAPNSRIFTRSLLRLY) directs the protein to the mitochondrion. Position 266–271 (266–271 (GSTATG)) interacts with NAD(+). The active-site Proton acceptor is the Glu288. The active-site Nucleophile is Cys322.

This sequence belongs to the aldehyde dehydrogenase family.

It localises to the mitochondrion matrix. The catalysed reaction is an aldehyde + NADP(+) + H2O = a carboxylate + NADPH + 2 H(+). It carries out the reaction an aldehyde + NAD(+) + H2O = a carboxylate + NADH + 2 H(+). It functions in the pathway alcohol metabolism; ethanol degradation; acetate from ethanol: step 2/2. With respect to regulation, induced by potassium ions. Minor mitochondrial aldehyde dehydrogenase isoform. Plays a role in regulation or biosynthesis of electron transport chain components. Involved in the biosynthesis of acetate during anaerobic growth on glucose. The chain is Aldehyde dehydrogenase 5, mitochondrial (ALD5) from Saccharomyces cerevisiae (strain YJM789) (Baker's yeast).